Consider the following 236-residue polypeptide: MALFRRPNWSALFEKIFIQKSFLGFCSLRVGCEIIIWFAIINKVSGLYGIVSLFQNSDASPWQVLMYVSSVLMLILFSWLAIHIPKSSVPHALILFYVYLIDFLLNVLFTVLFALSWFSKLVQSDSSSTEESADSDPSPSLLYLFFQAESIPSLLLLIFFASLKFYFVLITLSYSNKLIVDSGIRPQNLPPNFSGRVTRLLMKPYIMAANRSYLRNHTKRFTDSIELEQRLMDEVV.

The next 4 helical transmembrane spans lie at 34–54 (IIIW…VSLF), 64–84 (VLMY…AIHI), 93–113 (LILF…TVLF), and 151–171 (IPSL…VLIT).

The protein belongs to the KEI1 family. In terms of assembly, component of the inositol phosphorylceramide synthase complex composed of at least aur1 and kei1.

It localises to the golgi apparatus membrane. Functionally, regulatory component of the inositol phosphorylceramide (ICP) synthase which catalyzes the addition of a phosphorylinositol group onto ceramide to form inositol phosphorylceramide, an essential step in sphingolipid biosynthesis. Helps the medial Golgi localization of IPC synthase in a COPI vesicle-dependent manner. This chain is Inositol phosphorylceramide synthase regulatory subunit kei1 (kei1), found in Schizosaccharomyces pombe (strain 972 / ATCC 24843) (Fission yeast).